A 72-amino-acid chain; its full sequence is Translation initiation factor IF-1 (72 aa).

Positions 1-72 (MAKEELLEMR…TKGRITYRFK (72 aa)) constitute an S1-like domain.

Belongs to the IF-1 family. In terms of assembly, component of the 30S ribosomal translation pre-initiation complex which assembles on the 30S ribosome in the order IF-2 and IF-3, IF-1 and N-formylmethionyl-tRNA(fMet); mRNA recruitment can occur at any time during PIC assembly.

It localises to the cytoplasm. Its function is as follows. One of the essential components for the initiation of protein synthesis. Stabilizes the binding of IF-2 and IF-3 on the 30S subunit to which N-formylmethionyl-tRNA(fMet) subsequently binds. Helps modulate mRNA selection, yielding the 30S pre-initiation complex (PIC). Upon addition of the 50S ribosomal subunit IF-1, IF-2 and IF-3 are released leaving the mature 70S translation initiation complex. This Sphingopyxis alaskensis (strain DSM 13593 / LMG 18877 / RB2256) (Sphingomonas alaskensis) protein is Translation initiation factor IF-1.